We begin with the raw amino-acid sequence, 367 residues long: MEQTSMGKDSSKTAIAKFVPDDDGVLKHTIKVHQQPTSATEKKGPSMIARSNDLIEEIQIKRRFGEGTKPLFERDDVKVNTVADGESISSKKIKSHKASSPSKGVNGLVKQNSPDVTQKFTKKYGSSENPDFRRHSSYEKDNYHKSNSKSGVHLEGHEGNYRPYFSDPIRERDRLRRLYGSPNERRSRSHSPSSNRRRSSHRSRRGSGSPRSRRYTSRHRRRSNSQDRTSWKHNPEHRTSRRSRTRSPRGNRSRRRSSTSSNEDDEREYRHRHHRSQERSYQNVLPTLPPALTNYPCHYHVAPMLALPGVQHRPFLPMVASVRHLPPQALYGGLAGAMPFIPMPMTAYRPHLGHRYPPPRHKINKKN.

Residues 86-280 (ESISSKKIKS…HRHHRSQERS (195 aa)) form a disordered region. Residues 109 to 129 (VKQNSPDVTQKFTKKYGSSEN) show a composition bias toward polar residues. Over residues 130-144 (PDFRRHSSYEKDNYH) the composition is skewed to basic and acidic residues. Over residues 195–223 (NRRRSSHRSRRGSGSPRSRRYTSRHRRRS) the composition is skewed to basic residues. The segment covering 229-238 (TSWKHNPEHR) has biased composition (basic and acidic residues). The segment covering 239–257 (TSRRSRTRSPRGNRSRRRS) has biased composition (basic residues).

Sex differentiation protein controlling female somatic sexual differentiation. May act by promoting the formation of a splicing enhancer complex. In Musca domestica (House fly), this protein is Female-specific protein transformer.